The sequence spans 428 residues: 3-phosphoshikimate 1-carboxyvinyltransferase (428 aa).

Positions 20, 21, and 25 each coordinate 3-phosphoshikimate. Lysine 20 provides a ligand contact to phosphoenolpyruvate. Residues glycine 93 and arginine 122 each contribute to the phosphoenolpyruvate site. 3-phosphoshikimate-binding residues include serine 167, glutamine 169, aspartate 317, and lysine 344. Glutamine 169 serves as a coordination point for phosphoenolpyruvate. Aspartate 317 acts as the Proton acceptor in catalysis. 2 residues coordinate phosphoenolpyruvate: arginine 348 and arginine 390.

This sequence belongs to the EPSP synthase family. Monomer.

It localises to the cytoplasm. The catalysed reaction is 3-phosphoshikimate + phosphoenolpyruvate = 5-O-(1-carboxyvinyl)-3-phosphoshikimate + phosphate. It participates in metabolic intermediate biosynthesis; chorismate biosynthesis; chorismate from D-erythrose 4-phosphate and phosphoenolpyruvate: step 6/7. In terms of biological role, catalyzes the transfer of the enolpyruvyl moiety of phosphoenolpyruvate (PEP) to the 5-hydroxyl of shikimate-3-phosphate (S3P) to produce enolpyruvyl shikimate-3-phosphate and inorganic phosphate. The protein is 3-phosphoshikimate 1-carboxyvinyltransferase of Leptospira biflexa serovar Patoc (strain Patoc 1 / ATCC 23582 / Paris).